A 185-amino-acid chain; its full sequence is dTTP/UTP pyrophosphatase (185 aa).

Aspartate 64 (proton acceptor) is an active-site residue.

Belongs to the Maf family. YhdE subfamily. A divalent metal cation serves as cofactor.

The protein resides in the cytoplasm. The catalysed reaction is dTTP + H2O = dTMP + diphosphate + H(+). It catalyses the reaction UTP + H2O = UMP + diphosphate + H(+). Nucleoside triphosphate pyrophosphatase that hydrolyzes dTTP and UTP. May have a dual role in cell division arrest and in preventing the incorporation of modified nucleotides into cellular nucleic acids. The protein is dTTP/UTP pyrophosphatase of Thermococcus gammatolerans (strain DSM 15229 / JCM 11827 / EJ3).